Consider the following 49-residue polypeptide: Light-harvesting protein B-875 beta chain (49 aa).

Residues 2–27 lie on the Cytoplasmic side of the membrane; sequence ADKSDLGYTGLTDEQAQELHSVYMSG. Residues H21 and H39 each contribute to the a bacteriochlorophyll site. A helical; Signal-anchor for type II membrane protein transmembrane segment spans residues 28–45; that stretch reads LWPFSAVAIVAHLAVYIW. At 46-49 the chain is on the periplasmic side; the sequence is RPWF.

It belongs to the antenna complex beta subunit family. In terms of assembly, the core complex is formed by different alpha and beta chains, binding bacteriochlorophyll molecules, and arranged most probably in tetrameric structures disposed around the reaction center. The non-pigmented gamma chains may constitute additional components.

Its subcellular location is the cell inner membrane. Its function is as follows. Antenna complexes are light-harvesting systems, which transfer the excitation energy to the reaction centers. In Cereibacter sphaeroides (Rhodobacter sphaeroides), this protein is Light-harvesting protein B-875 beta chain (pufB).